A 199-amino-acid chain; its full sequence is Twist-related protein (199 aa).

Residues 1–43 form a disordered region; the sequence is MQEHQLSRVTSGNKKKYQSFDDESRDEKRMKCDSTDKLESNSN. Basic and acidic residues predominate over residues 25 to 39; it reads RDEKRMKCDSTDKLE. Residues 51 to 102 enclose the bHLH domain; that stretch reads THRVIANIRERQRTQALNQSFSTLRKIIPTLPSDKLSKIQTLRLAAMYIDFL.

In terms of assembly, efficient DNA binding requires dimerization with another bHLH protein. Homodimer. As to expression, expression is seen at the point of medusa formation in the ectodermal and endodermal bud tissues, and in the entocodon which gives rise to all smooth and striated muscle cells. After the subumbrellar plate differentiates from the endoderm, strong expression is detected until the medusa detaches from the gonzoid. Expression is observed in the distal part of the medusa but diminishes in entocodon-derived muscles as the tissues differentiate, with expression disappearing completely after stage 8. In later stages expression is seen in the distal and proximal parts of the bud and depending on state of maturity, in the developing gonadal tissue.

Its subcellular location is the nucleus. In terms of biological role, probable transcription factor, which may be responsible for the formation of myoepithelial cells in early muscle development in larva and the formation of non-muscle tissues in later bud stages and mesoderm-like structures in the medusa. This is Twist-related protein from Podocoryna carnea (Hydrozoan).